Reading from the N-terminus, the 170-residue chain is tRNA-splicing endonuclease (170 aa).

Active-site residues include Tyr110, His116, and Lys147.

This sequence belongs to the tRNA-intron endonuclease family. Archaeal short subfamily. As to quaternary structure, homotetramer; although the tetramer contains four active sites, only two participate in the cleavage. Therefore, it should be considered as a dimer of dimers.

It catalyses the reaction pretRNA = a 3'-half-tRNA molecule with a 5'-OH end + a 5'-half-tRNA molecule with a 2',3'-cyclic phosphate end + an intron with a 2',3'-cyclic phosphate and a 5'-hydroxyl terminus.. Its function is as follows. Endonuclease that removes tRNA introns. Cleaves pre-tRNA at the 5'- and 3'-splice sites to release the intron. The products are an intron and two tRNA half-molecules bearing 2',3' cyclic phosphate and 5'-OH termini. Recognizes a pseudosymmetric substrate in which 2 bulged loops of 3 bases are separated by a stem of 4 bp. The chain is tRNA-splicing endonuclease from Pyrococcus abyssi (strain GE5 / Orsay).